A 119-amino-acid polypeptide reads, in one-letter code: Large ribosomal subunit protein bL20 (119 aa).

This sequence belongs to the bacterial ribosomal protein bL20 family.

In terms of biological role, binds directly to 23S ribosomal RNA and is necessary for the in vitro assembly process of the 50S ribosomal subunit. It is not involved in the protein synthesizing functions of that subunit. This is Large ribosomal subunit protein bL20 from Clostridium novyi (strain NT).